A 97-amino-acid polypeptide reads, in one-letter code: Mapk-regulated corepressor-interacting protein 1 (97 aa).

The disordered stretch occupies residues 1–30; that stretch reads MTSSPVSRVVYNGKRNSSHRSPPNSSEIFT. At serine 21 the chain carries Phosphoserine. Threonine 30 carries the phosphothreonine modification. Position 41 is a phosphotyrosine (tyrosine 41). Positions 77–97 are disordered; the sequence is TFRPIDLSDLKRRNTQDAKKS. A PXDLS motif motif is present at residues 80–84; sequence PIDLS. The span at 82-97 shows a compositional bias: basic and acidic residues; the sequence is DLSDLKRRNTQDAKKS.

Belongs to the MCRIP family. Interacts (unphosphorylated form, via the PXDLS motif) with CTBP1, competitively inhibiting CTBP-ZEB1 interaction. Interacts with CTBP2. Interacts with MCRIP2. Interacts with DDX6. In terms of processing, phosphorylation by MAPK3/1 (ERK1/2) regulates MCRIP1 binding to CTBP(s).

The protein localises to the nucleus. It localises to the cytoplasm. Its subcellular location is the stress granule. Its function is as follows. The phosphorylation status of MCRIP1 functions as a molecular switch to regulate epithelial-mesenchymal transition. Unphosphorylated MCRIP1 binds to and inhibits the transcriptional corepressor CTBP(s). When phosphorylated by MAPK/ERK, MCRIP1 releases CTBP(s) resulting in transcriptional silencing of the E-cadherin gene and induction of epithelial-mesenchymal transition. This chain is Mapk-regulated corepressor-interacting protein 1 (MCRIP1), found in Bos taurus (Bovine).